The primary structure comprises 504 residues: Plasma protease C1 inhibitor (504 aa).

Positions 1-22 (MASRLTPLTLLLLLLAGDRAFS) are cleaved as a signal peptide. A disordered region spans residues 22–67 (SDPEATSHSTQDPLEAQAKSRESFPERDDSWSPPEPTVLPSTWPTT). A compositionally biased stretch (basic and acidic residues) spans 39–51 (AKSRESFPERDDS). Residues Asn-75, Asn-83, and Asn-107 are each glycosylated (N-linked (GlcNAc...) asparagine). The segment covering 85-124 (SFSQHSQPAAQLPTDSPGQPPLNSSSQPSTASDLPTQATT) has biased composition (polar residues). The disordered stretch occupies residues 85 to 141 (SFSQHSQPAAQLPTDSPGQPPLNSSSQPSTASDLPTQATTEPFCPEPLAQCSDSDRD). 2 disulfide bridges follow: Cys-128/Cys-432 and Cys-135/Cys-210. N-linked (GlcNAc...) asparagine glycosylation is found at Asn-243 and Asn-356.

It belongs to the serpin family. As to quaternary structure, interacts with MASP1.

It is found in the secreted. Its function is as follows. Serine protease inhibitor, which acrs as a regulator of the classical complement pathway. Forms a proteolytically inactive stoichiometric complex with the C1r or C1s proteases. May also regulate blood coagulation, fibrinolysis and the generation of kinins. Very efficient inhibitor of FXIIa. Inhibits chymotrypsin and kallikrein. The polypeptide is Plasma protease C1 inhibitor (Serping1) (Mus musculus (Mouse)).